The primary structure comprises 378 residues: Cytochrome P450 2C15 (378 aa).

Cysteine 323 is a heme binding site.

It belongs to the cytochrome P450 family. The cofactor is heme.

The protein localises to the endoplasmic reticulum membrane. The protein resides in the microsome membrane. The catalysed reaction is an organic molecule + reduced [NADPH--hemoprotein reductase] + O2 = an alcohol + oxidized [NADPH--hemoprotein reductase] + H2O + H(+). Its function is as follows. Cytochromes P450 are a group of heme-thiolate monooxygenases. In liver microsomes, this enzyme is involved in an NADPH-dependent electron transport pathway. It oxidizes a variety of structurally unrelated compounds, including steroids, fatty acids, and xenobiotics. This Oryctolagus cuniculus (Rabbit) protein is Cytochrome P450 2C15 (CYP2C15).